Consider the following 362-residue polypeptide: Chromobox protein homolog 8 (362 aa).

The region spanning 11–69 is the Chromo domain; it reads FAAEALLKRRIRKGRMEYLVKWKGWSQKYSTWEPEENILDARLLAAFEEREREMELYGP. A compositionally biased stretch (basic and acidic residues) spans 90-100; that stretch reads KTYEFRSDSTR. The segment at 90-197 is disordered; it reads KTYEFRSDST…LGEPSAGLGE (108 aa). Position 110 is a phosphoserine (S110). The segment covering 142–162 has biased composition (basic and acidic residues); the sequence is DPPRDRDRERDRGTSRVDDKP. Phosphoserine occurs at positions 164 and 229. Residue Y234 is modified to Phosphotyrosine. Phosphoserine is present on residues S238, S284, S305, and S325.

In terms of assembly, component of a PRC1-like complex. Interacts with RING1, RNF2, PCGF1, PCGF2, PCGF3, BMI1, PCGF5, PCGF6 and PHC2. Interacts with histone H3. Interacts with MLLT3. Interacts with PHC2. Interacts (via chromodomain) with single-stranded RNA.

It localises to the nucleus. The protein localises to the chromosome. In terms of biological role, component of a Polycomb group (PcG) multiprotein PRC1-like complex, a complex class required to maintain the transcriptionally repressive state of many genes, including Hox genes, throughout development. PcG PRC1 complex acts via chromatin remodeling and modification of histones; it mediates monoubiquitination of histone H2A 'Lys-119', rendering chromatin heritably changed in its expressibility. The chain is Chromobox protein homolog 8 (Cbx8) from Mus musculus (Mouse).